Consider the following 92-residue polypeptide: uncharacterized protein (92 aa).

This is an uncharacterized protein from Pseudoalteromonas phage PM2 (Bacteriophage PM2).